Consider the following 447-residue polypeptide: Maltoporin (447 aa).

An N-terminal signal peptide occupies residues 1–26 (MELRMKKVSVIAAAVAATLAAGSAFA).

This sequence belongs to the porin LamB (TC 1.B.3) family. In terms of assembly, homotrimer formed of three 18-stranded antiparallel beta-barrels, containing three independent channels.

The protein localises to the cell outer membrane. The catalysed reaction is beta-maltose(in) = beta-maltose(out). In terms of biological role, involved in the transport of maltose and maltodextrins. The sequence is that of Maltoporin from Vibrio campbellii (strain ATCC BAA-1116).